The following is a 246-amino-acid chain: Dolichol-phosphate mannosyltransferase subunit 1 (246 aa).

The GDP-alpha-D-mannose site is built by proline 20, tyrosine 22, glutamate 24, valine 49, aspartate 51, aspartate 104, alanine 105, aspartate 106, arginine 133, arginine 220, and lysine 226. Residue aspartate 106 participates in Mg(2+) binding. Position 106 (aspartate 106) interacts with Mn(2+).

This sequence belongs to the glycosyltransferase 2 family. Component of the dolichol-phosphate mannose (DPM) synthase complex composed of DPMS1, DPMS2 and DPMS3; in the complex interacts directly with DPMS3. Mg(2+) serves as cofactor. It depends on Mn(2+) as a cofactor. Requires Ca(2+) as cofactor.

The protein localises to the endoplasmic reticulum membrane. The enzyme catalyses a di-trans,poly-cis-dolichyl phosphate + GDP-alpha-D-mannose = a di-trans,poly-cis-dolichyl beta-D-mannosyl phosphate + GDP. It functions in the pathway protein modification; protein glycosylation. In terms of biological role, transfers mannose from GDP-mannose to dolichol monophosphate to form dolichol phosphate mannose (Dol-P-Man) which is the mannosyl donor in pathways leading to N-glycosylation, glycosyl phosphatidylinositol membrane anchoring, and O-mannosylation of proteins; catalytic subunit of the dolichol-phosphate mannose (DPM) synthase complex. Plays a role in plant development and physiology, sensitivity to ammonium stress and endoplasmic reticulum stress response. The sequence is that of Dolichol-phosphate mannosyltransferase subunit 1 from Arabidopsis thaliana (Mouse-ear cress).